The following is a 54-amino-acid chain: UPF0391 membrane protein Pnap_0920 (54 aa).

2 helical membrane passes run 6–26 (VVFL…IAAG) and 30–50 (IAKI…VVSL).

The protein belongs to the UPF0391 family.

It is found in the cell membrane. The sequence is that of UPF0391 membrane protein Pnap_0920 from Polaromonas naphthalenivorans (strain CJ2).